A 411-amino-acid polypeptide reads, in one-letter code: MGEIQKITVKNPIVEMDGDEMTRIIWQFIKDKLILPYLNVDLKYYDLGIEYRDKTDDKVTTDAAEAILQYGVGVKCATITPDEARVKEFNLKKMWLSPNGTLRNVIGGTVFREPIVIDNIPRIVPSWEKPIIIGRHAFGDQYKATDVVIPAAGDLKLVFKPKDGGEVQEFPVYQFDGPGVALSMYNTDASITDFAESSFQLAIERKLNLFSSTKNTILKKYDGKFKDIFEGLYASKYKTKMDELGIWYEHRLIDDMVAQMLKSKGGYIIAMKNYDGDVQSDIVAQGFGSLGLMTSVLVTPDGKAFESEAAHGTVTRHYRQHQQGKETSTNSIASIYAWTRGLIQRGKLDDTPEVVKFAEELEKAVIETVSKDNIMTKDLALTQGKTDRSSYVTTEEFIDGVANRLNKNLGY.

Residues Thr78 to Thr80 and Arg85 each bind NADP(+). Thr80 lines the substrate pocket. Residues Ser97–Arg103, Arg112, and Arg135 contribute to the substrate site. Residue Asp254 participates in Mn(2+) binding. Lys262 is an NADP(+) binding site. Asp277 lines the Mn(2+) pocket. NADP(+) is bound by residues Gly312–His317 and Asn330.

Belongs to the isocitrate and isopropylmalate dehydrogenases family. Requires Mg(2+) as cofactor. Mn(2+) is required as a cofactor.

Its subcellular location is the peroxisome. The catalysed reaction is D-threo-isocitrate + NADP(+) = 2-oxoglutarate + CO2 + NADPH. Functionally, may play a role in N-alkane metabolism, glutamate synthesis, and/or NADPH generation in the peroxisomes. This is Isocitrate dehydrogenase [NADP] peroxisomal (IDP2) from Candida tropicalis (Yeast).